The sequence spans 450 residues: 3-phosphoshikimate 1-carboxyvinyltransferase (450 aa).

3 residues coordinate 3-phosphoshikimate: Lys-28, Ser-29, and Arg-33. Lys-28 serves as a coordination point for phosphoenolpyruvate. Positions 100 and 128 each coordinate phosphoenolpyruvate. 3-phosphoshikimate-binding residues include Ser-173, Gln-175, Asp-326, and Lys-353. A phosphoenolpyruvate-binding site is contributed by Gln-175. Asp-326 (proton acceptor) is an active-site residue. Arg-357 and Arg-402 together coordinate phosphoenolpyruvate.

This sequence belongs to the EPSP synthase family. As to quaternary structure, monomer.

The protein localises to the cytoplasm. It carries out the reaction 3-phosphoshikimate + phosphoenolpyruvate = 5-O-(1-carboxyvinyl)-3-phosphoshikimate + phosphate. It functions in the pathway metabolic intermediate biosynthesis; chorismate biosynthesis; chorismate from D-erythrose 4-phosphate and phosphoenolpyruvate: step 6/7. Catalyzes the transfer of the enolpyruvyl moiety of phosphoenolpyruvate (PEP) to the 5-hydroxyl of shikimate-3-phosphate (S3P) to produce enolpyruvyl shikimate-3-phosphate and inorganic phosphate. The sequence is that of 3-phosphoshikimate 1-carboxyvinyltransferase from Brucella melitensis biotype 2 (strain ATCC 23457).